A 100-amino-acid polypeptide reads, in one-letter code: TrfB transcriptional repressor protein (100 aa).

Residues 37–56 constitute a DNA-binding region (H-T-H motif); that stretch reads QAEFVTSLGLTKGAVSQAVS.

Functionally, in conjunction with KorB, inhibits the transcription of kilA, trfA and korAB operons. In conjunction with KorC is responsible for the negative control of kilC and kilE operons. The sequence is that of TrfB transcriptional repressor protein (trfB) from Escherichia coli.